A 158-amino-acid polypeptide reads, in one-letter code: Egg cell-secreted protein 1.1 (158 aa).

Residues 1-27 form the signal peptide; the sequence is MASKSSFMATFNIVTLMLMVASSTVTA. Asn-122 is a glycosylation site (N-linked (GlcNAc...) asparagine).

This sequence belongs to the plant egg cell-secreted peptide family. As to expression, restricted to female reproductive tissues, specifically accumulating in storage vesicles of the unfertilized egg cell.

Its subcellular location is the cytoplasmic vesicle. It localises to the secreted. Functionally, involved in the regulation of gamete interactions during the double fertilization and to prevent multiple-pollen tube attraction; mediates the redistribution of the gamete fusogen HAP2/GCS1 to the cell surface after secretion upon sperm arrival. This chain is Egg cell-secreted protein 1.1 (EC1.1), found in Arabidopsis thaliana (Mouse-ear cress).